Here is a 93-residue protein sequence, read N- to C-terminus: Small ribosomal subunit protein uS19 (93 aa).

The protein belongs to the universal ribosomal protein uS19 family.

Functionally, protein S19 forms a complex with S13 that binds strongly to the 16S ribosomal RNA. This chain is Small ribosomal subunit protein uS19, found in Clostridium acetobutylicum (strain ATCC 824 / DSM 792 / JCM 1419 / IAM 19013 / LMG 5710 / NBRC 13948 / NRRL B-527 / VKM B-1787 / 2291 / W).